Reading from the N-terminus, the 253-residue chain is MHIDVIGHGPALVLLHGWALHGGVFAPLVERLAPHYQLHLVDLPGHGFSRDDSTPLALPYVVAEIAAATPPAVWLGWSLGGLFALHAAATLPQVRGLAMIAATPRFVRGSDWPDAVQRELFVQFGTELSRDYRGTLERFLALDTLGSAHARSELRSLRETLTARGEPAPEALQQGLSLLERTDLRRALPQLARPSLWIAGQRDRLVPAAGMHAAAALSPHAQALTIAGGGHAPFLGHADQVSEALQRFVASVP.

Substrate is bound by residues W18, 78–79 (SL), and 139–143 (FLALD). S78 (nucleophile) is an active-site residue. Active-site residues include D203 and H231. H231 provides a ligand contact to substrate.

The protein belongs to the AB hydrolase superfamily. Carboxylesterase BioH family. As to quaternary structure, monomer.

It is found in the cytoplasm. It carries out the reaction 6-carboxyhexanoyl-[ACP] methyl ester + H2O = 6-carboxyhexanoyl-[ACP] + methanol + H(+). It functions in the pathway cofactor biosynthesis; biotin biosynthesis. Its function is as follows. The physiological role of BioH is to remove the methyl group introduced by BioC when the pimeloyl moiety is complete. It allows to synthesize pimeloyl-ACP via the fatty acid synthetic pathway through the hydrolysis of the ester bonds of pimeloyl-ACP esters. This chain is Pimeloyl-[acyl-carrier protein] methyl ester esterase, found in Xanthomonas oryzae pv. oryzae (strain MAFF 311018).